The sequence spans 364 residues: MNPLLSFKDVSKGFEDVQILNEINIDIEPSYFYTLLGPSGCGKTTILKLIAGFEYPDSGDIIYKDKPIGKMPPNKRKVNTVFQDYALFPHLNVFDNIAYGLKLKKLSKSEIKRKVTEALQLVKLSGYEHRQIQGMSGGQKQRVAIARAIVNEPEILLLDESLSALDLKLRTEMQYLLRELQSRLGITFIFVTHDQEEALALSDYIFVMKDGKIQQFGTPIDIYDEPVNRFVADFIGESNIVHGTMVEDFVVNIYGQNFDCVDMGIKENKKVEVVIRPEDISLVSQNDGLFKAKVDSMLFRGVHYEICCKDRKGYEWVIQSTKKANVGSEVGLYFEPEAIHIMVPGETEEEFDKRIESYEDYHHA.

Residues 5-235 enclose the ABC transporter domain; it reads LSFKDVSKGF…PVNRFVADFI (231 aa). 37 to 44 provides a ligand contact to ATP; it reads GPSGCGKT.

The protein belongs to the ABC transporter superfamily. Spermidine/putrescine importer (TC 3.A.1.11.1) family. In terms of assembly, the complex is composed of two ATP-binding proteins (PotA), two transmembrane proteins (PotB and PotC) and a solute-binding protein (PotD).

Its subcellular location is the cell membrane. The enzyme catalyses ATP + H2O + polyamine-[polyamine-binding protein]Side 1 = ADP + phosphate + polyamineSide 2 + [polyamine-binding protein]Side 1.. Functionally, part of the ABC transporter complex PotABCD involved in spermidine/putrescine import. Responsible for energy coupling to the transport system. The protein is Spermidine/putrescine import ATP-binding protein PotA of Staphylococcus epidermidis (strain ATCC 12228 / FDA PCI 1200).